Here is a 361-residue protein sequence, read N- to C-terminus: MKALILVGGFGTRLRPLTLSFPKPLVDFANKPMILHQIEALKAVGVDEVVLAINYQPEVMLNFLKDFETKLEIKITCSQETEPLGTAGPLALARDKLLDGSGEPFFVLNSDVISEYPLKEMLEFHKSHGGEASIMVTKVDEPSKYGVVVMEESTGRVEKFVEKPKLYVGNKINAGIYLLNPSVLDKIELRPTSIEKETFPKIAAAQGLYAMVLPGFWMDIGQPRDYITGLRLYLDSLRKKSPAKLTSGPHIVGNVLVDETATIGEGCLIGPDVAIGPGCIVESGVRLSRCTVMRGVRIKKHACISSSIIGWHSTVGQWARIENMTILGEDVHVSDEIYSNGGVVLPHKEIKSNILKPEIVM.

Leu-6 and Val-7 together coordinate GDP-alpha-D-mannose. 5 residues coordinate diphosphate: Gly-9, Gly-11, Thr-12, Arg-13, and Lys-23. Gly-85, Asn-109, Asp-111, Gly-146, and Asn-173 together coordinate GDP-alpha-D-mannose.

Belongs to the transferase hexapeptide repeat family. Interacts in vitro with CSN5A and CSN5B, but in planta only with CSN5B, which targets CYT1 for degradation in the dark by the 26S proteasome. Forms homodimers in the unliganded structure. The product-bound structure is composed of six dimers that form a dodecameric assembly.

The protein resides in the cytoplasm. Its subcellular location is the nucleus. It catalyses the reaction alpha-D-mannose 1-phosphate + GTP + H(+) = GDP-alpha-D-mannose + diphosphate. Its pathway is nucleotide-sugar biosynthesis; GDP-alpha-D-mannose biosynthesis; GDP-alpha-D-mannose from alpha-D-mannose 1-phosphate (GTP route): step 1/1. Its function is as follows. Essential protein during embryogenesis. Catalyzes a reaction of the Smirnoff-Wheeler pathway, the major route to ascorbate biosynthesis in plants. Plays an essential role in plant growth and development and cell-wall architecture. Provides GDP-mannose, used for cell wall carbohydrate biosynthesis, protein N-glycosylation, as well as for the biosynthesis of the antioxidant ascorbate. The chain is Mannose-1-phosphate guanylyltransferase 1 from Arabidopsis thaliana (Mouse-ear cress).